Here is a 62-residue protein sequence, read N- to C-terminus: UPF0434 protein Smed_3047 (62 aa).

This sequence belongs to the UPF0434 family.

This is UPF0434 protein Smed_3047 from Sinorhizobium medicae (strain WSM419) (Ensifer medicae).